The primary structure comprises 548 residues: MYFPFLGRLSITDYIIVVLVYIESIISSVLKLIPQPMINLFEWLINFSTSSDDNTIEEKLRSAPTIHEMCAIFDISVEDHLVRTEDNYILTLHRIPPISKNRFNNKVVYLHHGLLMCSDVWCCNIERHKNLPFVLHDLGYDVWMGNNRGNKYSTAHLNKPPKSNKFWDFSIDEFAFFDIPNSIEFILDITKVDKVICIGFSQGSAQMFAAFSLSEKLNRKVSHFIAIAPAMTPKGLHNRIVDTLAKSSPGFMYLFFGRKIVLPSAVIWQRTLHPTLFNLCIDIANKILFNWKSFNILPRQKIASYAKLYSTTSVKSIVHWFQILRSQKFQMFEESDNMLNSLTRPYQIANFPTRTNIKIPILLIYGGIDSLVDIDVMKKNLPFNSVFDVKVDNYEHLDLIWGKDADTLVIAKVLRFIEFFNPGNVSVKTNQLLPSASLVEELPSTTWKTTHPTHGLSYRTHSADRSPLSVQADEADEVHNADNSRFLRRVFSTSAIDEDNENEHQDDTEDQIHKEQQRRLSAYLESSKDLRQLDANSSTTALDALNKE.

Residue M1 is modified to N-acetylmethionine; partial. Over M1–D13 the chain is Lumenal. Residues Y14 to P34 traverse the membrane as a helical segment. The Cytoplasmic portion of the chain corresponds to Q35 to E548. In terms of domain architecture, AB hydrolase-1 spans V107–G402. The GXSXG motif lies at G199–G203. The active-site Nucleophile is S201. K246 participates in a covalent cross-link: Glycyl lysine isopeptide (Lys-Gly) (interchain with G-Cter in ubiquitin). Active-site charge relay system residues include D369 and H396. 2 disordered regions span residues T449–E477 and I496–Q516. A phosphoserine mark is found at S462 and S466. A compositionally biased stretch (basic and acidic residues) spans N502–Q516. A phosphoserine mark is found at S521 and S538. The interval K528–E548 is disordered. T539 carries the post-translational modification Phosphothreonine.

Belongs to the AB hydrolase superfamily. Post-translationally, not N-glycosylated.

The protein resides in the lipid droplet. Its subcellular location is the membrane. The enzyme catalyses a sterol ester + H2O = a sterol + a fatty acid + H(+). Its function is as follows. Mediates the hydrolysis of steryl esters (SE). Preferentially hydrolyzes ergosteryl and zymosteryl esters. Required for mobilization of SEs from lipid particles/droplets, thereby playing a central role in lipid metabolism and sterol homeostasis. Sterol intermediates stored in SE and set free by SE hydrolases are recycled to the sterol biosynthetic pathway and converted to the final product, ergosterol, in the endoplasmic reticulum. Also has weak lipase activity toward triglycerides at neutral pH, however, the physiological relevance of this activity is unclear. The chain is Sterol esterase TGL1 (TGL1) from Saccharomyces cerevisiae (strain ATCC 204508 / S288c) (Baker's yeast).